Reading from the N-terminus, the 250-residue chain is Oil body-associated protein 2B (250 aa).

The segment at 1-29 (MSSSDQNPAATPASSGPAEPSPPGRPTAV) is disordered. Over residues 8–18 (PAATPASSGPA) the composition is skewed to low complexity.

Belongs to the OBAP family.

The protein is Oil body-associated protein 2B of Zea mays (Maize).